A 577-amino-acid chain; its full sequence is MESYTLSTSSISYAKPLSPLLLTAEQPSFILRNITLTSHPSQILAIIGPSGAGKSTLLDILAARTSPTSGSILLNSVLINPSSYRKISSYVPQHDTFFPLLTVSETFTFSASLLLPKNLSKVSSVVASLLKELNLTHLAHTRLGQGLSGGERRRVSIGLSLLHDPEVLLLDEPTSGLDSKSAFDVVQILKSIATSRERIVILSIHQPSFKILSLIDRVLLLSKGTIVYHGRLDLLEAFLLSKGFTVPSQLNSLEYAMEILQNIRDPYENANIALPDHCPESKKQNQKQSIVRYKSSRITEISLLSSRFWKIIYRTRQLLLTNILESLVVGLVLGTIYLNIGTGKEGIRKRFGLFAFTLTFLLSSTTQTLPIFIDERPILLRETSSGLYRLSSHILANTLVFLPYLLLIAIIYSVSLYFLVGLCFSWQALAYFVLVIWIIVLMANSFVLFLSSLAPNYIAGTSSVTILLAAFFLFSGYFISKESLPKYWLFMYFFSMYKYALDALLINEYSCLHNKCLVWFEEASVNSCLVTGGDVLDKNGLHERQRWFNVYMLLGFFVLYRVLCFLVLLKRVSGSKR.

One can recognise an ABC transporter domain in the interval 6–248; the sequence is LSTSSISYAK…LLSKGFTVPS (243 aa). 48 to 55 is an ATP binding site; that stretch reads GPSGAGKS. The ABC transmembrane type-2 domain maps to 299–509; that stretch reads TEISLLSSRF…ALDALLINEY (211 aa). A run of 7 helical transmembrane segments spans residues 318–338, 353–373, 400–420, 429–449, 458–478, 487–507, and 548–568; these read LLLT…TIYL, LFAF…PIFI, VFLP…YFLV, LAYF…FVLF, IAGT…SGYF, YWLF…LLIN, and FNVY…FLVL.

It belongs to the ABC transporter superfamily. ABCG family. Eye pigment precursor importer (TC 3.A.1.204) subfamily.

It localises to the membrane. In Arabidopsis thaliana (Mouse-ear cress), this protein is ABC transporter G family member 4 (ABCG4).